The sequence spans 712 residues: Protein TAPT1 homolog (712 aa).

Low complexity predominate over residues Met-1–Ser-21. 2 disordered regions span residues Met-1–Ile-22 and Ile-44–Thr-66. Transmembrane regions (helical) follow at residues Phe-196–Leu-216, Thr-222–Ile-242, Thr-305–Leu-325, His-379–Ile-399, Phe-402–Leu-422, Gly-470–Leu-490, and Ile-497–Met-517. The span at Glu-596 to Pro-619 shows a compositional bias: basic and acidic residues. Residues Glu-596–Glu-712 are disordered. Positions Thr-656–Ala-667 are enriched in polar residues. Residues Thr-675–Ser-692 are compositionally biased toward low complexity.

The protein belongs to the TAPT1 family.

It is found in the membrane. In Caenorhabditis elegans, this protein is Protein TAPT1 homolog.